A 235-amino-acid chain; its full sequence is Purine nucleoside phosphorylase DeoD-type (235 aa).

Histidine 4 is a binding site for a purine D-ribonucleoside. Phosphate contacts are provided by residues glycine 20, arginine 24, arginine 43, and 87–90 (RVGT). A purine D-ribonucleoside-binding positions include 178-180 (EME) and 202-203 (SD). Residue aspartate 203 is the Proton donor of the active site.

This sequence belongs to the PNP/UDP phosphorylase family. In terms of assembly, homohexamer; trimer of homodimers.

It catalyses the reaction a purine D-ribonucleoside + phosphate = a purine nucleobase + alpha-D-ribose 1-phosphate. The catalysed reaction is a purine 2'-deoxy-D-ribonucleoside + phosphate = a purine nucleobase + 2-deoxy-alpha-D-ribose 1-phosphate. Its function is as follows. Catalyzes the reversible phosphorolytic breakdown of the N-glycosidic bond in the beta-(deoxy)ribonucleoside molecules, with the formation of the corresponding free purine bases and pentose-1-phosphate. The polypeptide is Purine nucleoside phosphorylase DeoD-type (Geobacillus sp. (strain WCH70)).